The following is a 201-amino-acid chain: Small ribosomal subunit protein uS4 (201 aa).

One can recognise an S4 RNA-binding domain in the interval 91 to 151; sequence SRLDNVVYRA…EKSRSMLWFE (61 aa).

Belongs to the universal ribosomal protein uS4 family. As to quaternary structure, part of the 30S ribosomal subunit. Contacts protein S5. The interaction surface between S4 and S5 is involved in control of translational fidelity.

One of the primary rRNA binding proteins, it binds directly to 16S rRNA where it nucleates assembly of the body of the 30S subunit. Functionally, with S5 and S12 plays an important role in translational accuracy. The protein is Small ribosomal subunit protein uS4 of Corynebacterium jeikeium (strain K411).